Here is a 1685-residue protein sequence, read N- to C-terminus: MAQISSNSGFKECPSSHPEPTRAKDVDKEEALQMEAEALAKLQKDRQVTDNQRGFELSSSTRKKAQVYNKQDYDLMVFPESDSQKRALDIDVEKLTQAELEKLLLDDSLETRKTPVLPVTPILSPSFSAQLYFRPTIQRGQWPPGLSGPSTYALPSIYPSTYSKQAAFQNGFNPRMPTFPSTEPIYLSLPGQSPYFSYPLTPATPFHPQGSLPIYRPVVSPDMAKLFDKIASTSEFLKNGKARADLEITDSKVSNLQVSPKSEDISKFDWLDLDPLSKPKVDNVEVLDHEEEKNVSSLLAKDPWDAVLLEERSTANCHLERKMNGKSLSVATVTRSQSLNIRTTQLAKAHISQKDPNGTSSLPTGSSLLQEVEVQNEEMAAFSRSITKLKTKFPYTNHHTNPGYLLSPVTAQRNICGENASVKVSIDIEGFQLPVTFTCDVSSTVEIIIMQALCWVHDDLNQVDVGSYVLKVCGQEEVLQNNHCLGSHEHIQNCRKWDTEIRLQLLTFSAMCQNLARTAEDDETPVDLNKHLYQIEKPYKEAMTRHPVEELLDSYHNQVELALQIENQHRAVDQVIKAVRKICSALDGVETLAITESVKKLKRAVNLPRSKTADVASLFGGEDTSKSSTRGSLNPENPVQVSINQLTAAIYDLLRLHANSGRSPTDCAQSSKSVKEAWTTTEQLQFTIFAAHGISSNWVSNYEKYYLICSLSHNGKDLFKPIQSKKVGTYKNFFYLIKWDELIIFPIQISQLPLESLLHLTLFGILNQSSGSSPDSNKQRKGPEALGKVSLPLFDFKRFLTCGTKLLYLWTSSHTNSVPGAVTKKGYVMERIVLQVDFPSPAFDIIYTTPQVDRSIIQQHNLETLENDVKGKLLDILHKDSSLGLSKEDKAFLWEKRYYCFKHPNCLPKILASAPNWKWVNLAKTYSLLHQWPALYPLIALELLDSKFADQEVRSLAVTWIEAISDDELTDLLPQFVQALKYEIYLNSSLVQFLLSRALGNIQIAHNLYWLLKDALHDVQFSTRYEHVLGALLSVGGKRLREELRKQTKLVQLLGGVAEKVRQASGSARQVVLQRSMERVQSFFQKNKCRLPLKPSLVAKELSIKSCSFFSSNAVPLKVTMVNADPMGEEINVMFKVGEDLRQDMLALQMIKIMDKIWLKEGLDLRMVIFKCLSTGRDRGMVELVPASDTLRKIQVEYGVTGSFKDKPLAEWLRKYNPSEEEYEKASENFIYSCAGCCVATYVLGICDRHNDNIMLRSTGHMFHIDFGKFLGHAQMFGTFKRDRAPFVLTSDMAYVINGGEKPTIRFQLFVDLCCQAYNLIRKQTNLFLNLLSLMIPSGLPELTSIQDLKYVRDALQPQTTDAEATIFFTRLIESSLGSIATKFNFLIHNLAQLRFSGLPSNDEPILSFSPKTYSFKQDGRIKEVSVFTYHKKYNPDKHYIYVVRILREGQIEPSFVFRTFDEFQELHNKLSIIFPLWKLPGFPNRMVLGRTHIKDVAAKRKIELNSYLQSLMNASTDVAECDLVCTFFHPLLRDEKAEGIARSADAGSFSPPTPGQIGGAVKLSISYRNGTLFIMVMHTKDLVTEDGADPNPYVKTYLLPDNHKTSKRKTKISRKTRNPTFNEMLVYSGYSKETLRQRELQLSVLSAESLRENFFLGGVTLPLKDFNLSKETVKWYQLTAATYL.

Disordered stretches follow at residues 1-33 and 41-60; these read MAQI…EALQ and KLQK…LSSS. Ala2 carries the N-acetylalanine modification. An interaction with clathrin; sufficient to induce clathrin assembly region spans residues 2–142; sequence AQISSNSGFK…FRPTIQRGQW (141 aa). Over residues 19–31 the composition is skewed to basic and acidic residues; the sequence is EPTRAKDVDKEEA. Residues 49–60 show a composition bias toward polar residues; sequence TDNQRGFELSSS. Phosphoserine occurs at positions 60, 108, 259, 327, and 338. The PI3K-RBD domain maps to 419–507; sequence NASVKVSIDI…DTEIRLQLLT (89 aa). At Ser628 the chain carries Phosphoserine. A C2 PI3K-type domain is found at 680 to 839; that stretch reads TTEQLQFTIF…ERIVLQVDFP (160 aa). The PIK helical domain maps to 859–1035; the sequence is QHNLETLEND…EHVLGALLSV (177 aa). The region spanning 1103 to 1381 is the PI3K/PI4K catalytic domain; sequence SIKSCSFFSS…LIESSLGSIA (279 aa). Positions 1109–1115 are G-loop; the sequence is FFSSNAV. Positions 1245–1253 are catalytic loop; the sequence is GICDRHNDN. The interval 1264–1290 is activation loop; it reads HIDFGKFLGHAQMFGTFKRDRAPFVLT. One can recognise a PX domain in the interval 1420-1536; that stretch reads GRIKEVSVFT…TFFHPLLRDE (117 aa). The tract at residues 1486-1491 is interaction with PtdIns(4,5)P2-containing membranes; sequence RMVLGR. At Ser1551 the chain carries Phosphoserine. Positions 1554–1677 constitute a C2 domain; sequence TPGQIGGAVK…NLSKETVKWY (124 aa). A Nuclear localization signal motif is present at residues 1607–1618; it reads SKRKTKISRKTR.

This sequence belongs to the PI3/PI4-kinase family. Part of a complex with ERBB2 and EGFR. Interacts with clathrin trimers. Interacts with SBF2/MTMR13. It depends on Ca(2+) as a cofactor. Requires Mg(2+) as cofactor. Post-translationally, phosphorylated on Ser-259 during mitosis and upon UV irradiation; which does not change enzymatic activity but leads to proteasomal degradation. Phosphorylated upon insulin stimulation; which may lead to enzyme activation.

It localises to the cell membrane. It is found in the cytoplasmic vesicle. The protein localises to the clathrin-coated vesicle. The protein resides in the nucleus. Its subcellular location is the cytoplasm. It localises to the golgi apparatus. It is found in the trans-Golgi network. It catalyses the reaction a 1,2-diacyl-sn-glycero-3-phospho-(1D-myo-inositol 4-phosphate) + ATP = a 1,2-diacyl-sn-glycero-3-phospho-(1D-myo-inositol-3,4-bisphosphate) + ADP + H(+). The enzyme catalyses a 1,2-diacyl-sn-glycero-3-phospho-(1D-myo-inositol) + ATP = a 1,2-diacyl-sn-glycero-3-phospho-(1D-myo-inositol-3-phosphate) + ADP + H(+). It carries out the reaction a 1,2-diacyl-sn-glycero-3-phospho-(1D-myo-inositol-4,5-bisphosphate) + ATP = a 1,2-diacyl-sn-glycero-3-phospho-(1D-myo-inositol-3,4,5-trisphosphate) + ADP + H(+). Its activity is regulated as follows. Only slightly inhibited by wortmannin and LY294002. Activated by clathrin and insulin. Its function is as follows. Generates phosphatidylinositol 3-phosphate (PtdIns3P) and phosphatidylinositol 3,4-bisphosphate (PtdIns(3,4)P2) that act as second messengers. Has a role in several intracellular trafficking events. Functions in insulin signaling and secretion. Required for translocation of the glucose transporter SLC2A4/GLUT4 to the plasma membrane and glucose uptake in response to insulin-mediated RHOQ activation. Regulates insulin secretion through two different mechanisms: involved in glucose-induced insulin secretion downstream of insulin receptor in a pathway that involves AKT1 activation and TBC1D4/AS160 phosphorylation, and participates in the late step of insulin granule exocytosis probably in insulin granule fusion. Synthesizes PtdIns3P in response to insulin signaling. Functions in clathrin-coated endocytic vesicle formation and distribution. Regulates dynamin-independent endocytosis, probably by recruiting EEA1 to internalizing vesicles. In neurosecretory cells synthesizes PtdIns3P on large dense core vesicles. Participates in calcium induced contraction of vascular smooth muscle by regulating myosin light chain (MLC) phosphorylation through a mechanism involving Rho kinase-dependent phosphorylation of the MLCP-regulatory subunit MYPT1. May play a role in the EGF signaling cascade. May be involved in mitosis and UV-induced damage response. Required for maintenance of normal renal structure and function by supporting normal podocyte function. Involved in the regulation of ciliogenesis and trafficking of ciliary components. This Pongo abelii (Sumatran orangutan) protein is Phosphatidylinositol 4-phosphate 3-kinase C2 domain-containing subunit alpha (PIK3C2A).